The chain runs to 218 residues: Protein-methionine-sulfoxide reductase heme-binding subunit MsrQ (218 aa).

The next 5 helical transmembrane spans lie at 12–32 (TLIKSMLFIAALLPFGRLALF), 82–102 (MLGLFAFFYACLHFTTFLWFD), 118–138 (PFITVGFSAFVLLIPLAITST), 150–170 (WQWLHRLVYVIAALGILHYWW), and 180–200 (QPIIFGTIVAVLLLVRVFWAW).

This sequence belongs to the MsrQ family. In terms of assembly, heterodimer of a catalytic subunit (MsrP) and a heme-binding subunit (MsrQ). The cofactor is FMN. Requires heme b as cofactor.

It localises to the cell inner membrane. Part of the MsrPQ system that repairs oxidized periplasmic proteins containing methionine sulfoxide residues (Met-O), using respiratory chain electrons. Thus protects these proteins from oxidative-stress damage caused by reactive species of oxygen and chlorine generated by the host defense mechanisms. MsrPQ is essential for the maintenance of envelope integrity under bleach stress, rescuing a wide series of structurally unrelated periplasmic proteins from methionine oxidation. MsrQ provides electrons for reduction to the reductase catalytic subunit MsrP, using the quinone pool of the respiratory chain. The protein is Protein-methionine-sulfoxide reductase heme-binding subunit MsrQ of Herminiimonas arsenicoxydans.